We begin with the raw amino-acid sequence, 525 residues long: GMP synthase [glutamine-hydrolyzing] (525 aa).

The Glutamine amidotransferase type-1 domain maps to 9–207; that stretch reads RILILDFGSQ…VLDICQCEAL (199 aa). C86 functions as the Nucleophile in the catalytic mechanism. Catalysis depends on residues H181 and E183. Residues 208 to 400 enclose the GMPS ATP-PPase domain; that stretch reads WTPATIIEDA…LGLPYDMLFR (193 aa). 235-241 is a binding site for ATP; sequence SGGVDSS.

As to quaternary structure, homodimer.

It catalyses the reaction XMP + L-glutamine + ATP + H2O = GMP + L-glutamate + AMP + diphosphate + 2 H(+). Its pathway is purine metabolism; GMP biosynthesis; GMP from XMP (L-Gln route): step 1/1. Its function is as follows. Catalyzes the synthesis of GMP from XMP. In Serratia proteamaculans (strain 568), this protein is GMP synthase [glutamine-hydrolyzing].